The primary structure comprises 840 residues: Origin recognition complex subunit 1 (840 aa).

In terms of domain architecture, BAH spans 44–170; the sequence is IHIKVGQFVL…KKDFAPLPPE (127 aa). Disordered stretches follow at residues 195–218 and 242–301; these read VKSP…STSK and FTRK…KNGQ. Phosphoserine is present on residues Ser197, Ser255, Ser258, Ser276, Ser291, and Ser332. Residues 392-414 show a composition bias toward acidic residues; sequence DGDDRDQEEEESVDSESEEEDEF. A disordered region spans residues 392–456; it reads DGDDRDQEEE…HRATPQIRDR (65 aa). Positions 418–439 are enriched in polar residues; it reads LPTRNSLGQSRTRQTPSKSPQK. Residues Val479 and 513 to 521 each bind ATP; that span reads GVPGTGKTA. The segment at 480–840 is necessary and sufficient for ORC complex assembly; the sequence is PDSLPCREQE…NDVLFALKEE (361 aa). Positions 599 and 600 each coordinate Mg(2+). ATP is bound by residues Glu600, Asn633, and Arg699.

Belongs to the ORC1 family. Component of ORC, a complex composed of at least 6 subunits: ORC1, ORC2, ORC3, ORC4, ORC5 and ORC6. ORC is regulated in a cell-cycle dependent manner. It is sequentially assembled at the exit from anaphase of mitosis and disassembled as cells enter S phase. Interacts with CDC6 and KAT7/HBO1. Interacts with LRWD1 predominantly during the G1 phase and with less affinity during mitosis, when phosphorylated. Phosphorylated during mitosis.

The protein resides in the nucleus. Component of the origin recognition complex (ORC) that binds origins of replication. DNA-binding is ATP-dependent. The specific DNA sequences that define origins of replication have not been identified yet. ORC is required to assemble the pre-replication complex necessary to initiate DNA replication. The protein is Origin recognition complex subunit 1 (Orc1) of Mus musculus (Mouse).